We begin with the raw amino-acid sequence, 651 residues long: Receptor-like serine/threonine-protein kinase At4g25390 (651 aa).

An N-terminal signal peptide occupies residues 1–25 (MPSRSISAPVPVLAPAPIVSSLVPA). Residues 26 to 40 (APSGHQNKTTRIFPP) lie on the Extracellular side of the membrane. N-linked (GlcNAc...) asparagine glycosylation is present at Asn-32. Residues 41 to 61 (FVVAGAGAGFSLFITLSVCFC) form a helical membrane-spanning segment. Over 62–651 (KFSRKRSSPP…PLKTTRKQRR (590 aa)) the chain is Cytoplasmic. The interval 66-87 (KRSSPPAENASSSPRRPSPREF) is disordered. The segment covering 69-87 (SPPAENASSSPRRPSPREF) has biased composition (low complexity). In terms of domain architecture, Protein kinase spans 99 to 633 (FSQANRLGQG…LKGEVNLPEL (535 aa)). ATP-binding positions include 105 to 113 (LGQGGFGVV) and Lys-127. Asp-225 (proton acceptor) is an active-site residue.

Belongs to the protein kinase superfamily. Ser/Thr protein kinase family.

Its subcellular location is the cell membrane. The catalysed reaction is L-seryl-[protein] + ATP = O-phospho-L-seryl-[protein] + ADP + H(+). The enzyme catalyses L-threonyl-[protein] + ATP = O-phospho-L-threonyl-[protein] + ADP + H(+). The sequence is that of Receptor-like serine/threonine-protein kinase At4g25390 from Arabidopsis thaliana (Mouse-ear cress).